The sequence spans 395 residues: Forkhead box protein I3 (395 aa).

The fork-head DNA-binding region spans 131–225 (RPPYSYSALI…DNGNFRRKRK (95 aa)). Disordered stretches follow at residues 216–288 (DNGN…GIIS) and 322–370 (RNFS…SSGS). Positions 221 to 227 (RRKRKRR) match the Nuclear localization signal motif. A compositionally biased stretch (low complexity) spans 234 to 245 (ATTAAASSLGGL). Residues 325–335 (SAGQLSGGTFT) show a composition bias toward polar residues. Low complexity predominate over residues 336 to 349 (PSSSSSQEVPSPEQ).

As to expression, initially expressed in the pre-placodal ectoderm surrounding the neural plate, which will give rise to all craniofacial sensory organs. Expression then becomes restricted to a region immediately anterior to the first pair of somites that will give rise to the otic and epibranchial placodes, before becoming down-regulated from this region and restricted to the ectoderm and endoderm of the pharyngeal arches.

Its subcellular location is the nucleus. Transcription factor required for pharyngeal arch development, which is involved in otic placode development. This chain is Forkhead box protein I3, found in Gallus gallus (Chicken).